The sequence spans 272 residues: Ribosomal RNA small subunit methyltransferase A (272 aa).

6 residues coordinate S-adenosyl-L-methionine: asparagine 18, leucine 20, glycine 45, glutamate 66, aspartate 91, and asparagine 113.

It belongs to the class I-like SAM-binding methyltransferase superfamily. rRNA adenine N(6)-methyltransferase family. RsmA subfamily.

The protein resides in the cytoplasm. It catalyses the reaction adenosine(1518)/adenosine(1519) in 16S rRNA + 4 S-adenosyl-L-methionine = N(6)-dimethyladenosine(1518)/N(6)-dimethyladenosine(1519) in 16S rRNA + 4 S-adenosyl-L-homocysteine + 4 H(+). Functionally, specifically dimethylates two adjacent adenosines (A1518 and A1519) in the loop of a conserved hairpin near the 3'-end of 16S rRNA in the 30S particle. May play a critical role in biogenesis of 30S subunits. The chain is Ribosomal RNA small subunit methyltransferase A from Photorhabdus laumondii subsp. laumondii (strain DSM 15139 / CIP 105565 / TT01) (Photorhabdus luminescens subsp. laumondii).